Here is a 170-residue protein sequence, read N- to C-terminus: Large ribosomal subunit protein uL15 (170 aa).

Residues 1–12 (MKLHDLRPAEGA) show a composition bias toward basic and acidic residues. The segment at 1–52 (MKLHDLRPAEGAHRKRKRIGRGHGSGKGKTGGKGMMGQKARSGPGPYRTFEG) is disordered. Residues 13-26 (HRKRKRIGRGHGSG) are compositionally biased toward basic residues.

It belongs to the universal ribosomal protein uL15 family. As to quaternary structure, part of the 50S ribosomal subunit.

Binds to the 23S rRNA. In Chloroflexus aurantiacus (strain ATCC 29366 / DSM 635 / J-10-fl), this protein is Large ribosomal subunit protein uL15.